The chain runs to 459 residues: MEIPIESLWSQVLERLQVELSRPTFETWIKTASAERLENNCLVIRTPNPFARNWLQKYYINTIAHAVQDILGHPVGIYITVAQGDEVSHFSEREVSWESTNPSSIPESLPHHNHKTTELNSKYVFSRFVVGANNRMAHAASLAVAESPGKEFNPLFLCGGVGLGKTHLMQAIGHYRWKICPDCKIFYVSTEQFTNDLITAIRKDSMQSFREHYRAADVLLVDDIQFLEGKEYTQEEFFYTFNTLHEAGKQVVIASDRPPNQIPSLQERLCSRFSMGLIADIQKPDLETRMAILQKKAEDENIRLPRDVIEYIASNYTSNIRELEGALIRAVAYISIWGLPMTVENITPVLEPPNEKMAASPEAILKVVADNFDVSIDDLKGNSRRREISWARQIGMYLMRQHTSLSLPRIGEEFGGKDHTTVIYSCDKITQLHQGDRTLAQTLRQLSDRINMTSRSQKS.

The interval 1–73 (MEIPIESLWS…AHAVQDILGH (73 aa)) is domain I, interacts with DnaA modulators. The interval 73–117 (HPVGIYITVAQGDEVSHFSEREVSWESTNPSSIPESLPHHNHKTT) is domain II. The interval 118 to 334 (ELNSKYVFSR…GALIRAVAYI (217 aa)) is domain III, AAA+ region. ATP is bound by residues glycine 162, glycine 164, lysine 165, and threonine 166. Positions 335 to 459 (SIWGLPMTVE…INMTSRSQKS (125 aa)) are domain IV, binds dsDNA.

Belongs to the DnaA family. As to quaternary structure, oligomerizes as a right-handed, spiral filament on DNA at oriC.

Its subcellular location is the cytoplasm. Its function is as follows. Plays an essential role in the initiation and regulation of chromosomal replication. ATP-DnaA binds to the origin of replication (oriC) to initiate formation of the DNA replication initiation complex once per cell cycle. Binds the DnaA box (a 9 base pair repeat at the origin) and separates the double-stranded (ds)DNA. Forms a right-handed helical filament on oriC DNA; dsDNA binds to the exterior of the filament while single-stranded (ss)DNA is stabiized in the filament's interior. The ATP-DnaA-oriC complex binds and stabilizes one strand of the AT-rich DNA unwinding element (DUE), permitting loading of DNA polymerase. After initiation quickly degrades to an ADP-DnaA complex that is not apt for DNA replication. Binds acidic phospholipids. This chain is Chromosomal replication initiator protein DnaA, found in Nostoc punctiforme (strain ATCC 29133 / PCC 73102).